A 355-amino-acid chain; its full sequence is Protein RecA (355 aa).

74–81 is an ATP binding site; it reads GPESSGKT.

The protein belongs to the RecA family.

It is found in the cytoplasm. In terms of biological role, can catalyze the hydrolysis of ATP in the presence of single-stranded DNA, the ATP-dependent uptake of single-stranded DNA by duplex DNA, and the ATP-dependent hybridization of homologous single-stranded DNAs. It interacts with LexA causing its activation and leading to its autocatalytic cleavage. This Cytophaga hutchinsonii (strain ATCC 33406 / DSM 1761 / CIP 103989 / NBRC 15051 / NCIMB 9469 / D465) protein is Protein RecA.